The primary structure comprises 329 residues: DNA-directed RNA polymerase subunit alpha (329 aa).

The alpha N-terminal domain (alpha-NTD) stretch occupies residues 1 to 234; it reads MQGSVTEFLK…EQLDAFVELR (234 aa). The alpha C-terminal domain (alpha-CTD) stretch occupies residues 248 to 329; sequence FDPILLRPVD…WPPASLADDL (82 aa).

It belongs to the RNA polymerase alpha chain family. Homodimer. The RNAP catalytic core consists of 2 alpha, 1 beta, 1 beta' and 1 omega subunit. When a sigma factor is associated with the core the holoenzyme is formed, which can initiate transcription.

It carries out the reaction RNA(n) + a ribonucleoside 5'-triphosphate = RNA(n+1) + diphosphate. Its function is as follows. DNA-dependent RNA polymerase catalyzes the transcription of DNA into RNA using the four ribonucleoside triphosphates as substrates. The chain is DNA-directed RNA polymerase subunit alpha from Shewanella loihica (strain ATCC BAA-1088 / PV-4).